Consider the following 291-residue polypeptide: MPNLKDLKNRIASVKSTRKITKAMQMVAAAKLRRAQESAEAARPYAERFNAVMAGLAASVGGSDSAPLLLRGTGSDQVHLLVVMTAERGLCGGFNSNIAKLARVRANELLAKGKTVKILTVGKKGRDAMKRDFAANMVGHVDLSGIKALGYANAQDIARDVLGRFDAGEFDVATIFYAKFQNVVTQLPTAQQIIPAAFEAEGESDEVALFDYEPSEEAILADLLPRGVATQIFSALLENGASEQGARMSAMDNATRNAGEMIDKLTIEFNRSRQAVITNELIEIISGAEAL.

This sequence belongs to the ATPase gamma chain family. F-type ATPases have 2 components, CF(1) - the catalytic core - and CF(0) - the membrane proton channel. CF(1) has five subunits: alpha(3), beta(3), gamma(1), delta(1), epsilon(1). CF(0) has three main subunits: a, b and c.

The protein resides in the cell inner membrane. In terms of biological role, produces ATP from ADP in the presence of a proton gradient across the membrane. The gamma chain is believed to be important in regulating ATPase activity and the flow of protons through the CF(0) complex. The sequence is that of ATP synthase gamma chain from Ruegeria pomeroyi (strain ATCC 700808 / DSM 15171 / DSS-3) (Silicibacter pomeroyi).